The chain runs to 156 residues: Ribosomal RNA large subunit methyltransferase H (156 aa).

S-adenosyl-L-methionine contacts are provided by residues Leu-73, Gly-104, and 123-128; that span reads LSKLTL.

It belongs to the RNA methyltransferase RlmH family. As to quaternary structure, homodimer.

It is found in the cytoplasm. It carries out the reaction pseudouridine(1915) in 23S rRNA + S-adenosyl-L-methionine = N(3)-methylpseudouridine(1915) in 23S rRNA + S-adenosyl-L-homocysteine + H(+). Functionally, specifically methylates the pseudouridine at position 1915 (m3Psi1915) in 23S rRNA. This chain is Ribosomal RNA large subunit methyltransferase H, found in Hydrogenovibrio crunogenus (strain DSM 25203 / XCL-2) (Thiomicrospira crunogena).